A 141-amino-acid chain; its full sequence is Galactose-6-phosphate isomerase subunit LacA (141 aa).

Belongs to the LacAB/RpiB family. As to quaternary structure, heteromultimeric protein consisting of LacA and LacB.

The enzyme catalyses aldehydo-D-galactose 6-phosphate = keto-D-tagatose 6-phosphate. It functions in the pathway carbohydrate metabolism; D-galactose 6-phosphate degradation; D-tagatose 6-phosphate from D-galactose 6-phosphate: step 1/1. This is Galactose-6-phosphate isomerase subunit LacA from Streptococcus pneumoniae (strain 70585).